The following is a 28-amino-acid chain: Ranatuerin-2SEc (28 aa).

Cysteine 23 and cysteine 28 are disulfide-bonded.

In terms of tissue distribution, expressed by the skin glands.

It is found in the secreted. In terms of biological role, mast cell degranulating peptide. Causes histamine release from rat peritoneal mast cells in vitro. Has antibacterial activity against the Gram-negative bacterium E.coli K12 and Gram-positive bacterium M.luteus NCT C2665. This is Ranatuerin-2SEc from Lithobates sevosus (Dusky gopher frog).